A 600-amino-acid chain; its full sequence is Spastin (600 aa).

Residues 1-39 are disordered; sequence MNSPGGRNDKKKPVTPAAETGPGSPTTPPSTETQVVLAP. At 1-53 the chain is on the cytoplasmic side; sequence MNSPGGRNDKKKPVTPAAETGPGSPTTPPSTETQVVLAPPSPHKRNLHLFSYP. Low complexity predominate over residues 15–33; the sequence is TPAAETGPGSPTTPPSTET. An intramembrane region (helical) is located at residues 54 to 74; the sequence is LLAVFSLLRFLAFQLGLLFVW. The Cytoplasmic segment spans residues 75 to 600; that stretch reads CCELLSRSVM…WNQDFGDTTV (526 aa). Residues 110–185 form the MIT domain; the sequence is YHQQAFQYIS…IMAKDRLQLL (76 aa). The disordered stretch occupies residues 213–294; sequence GLLKPEKGAV…KPATPTTAVR (82 aa). Positions 216–228 are enriched in basic and acidic residues; that stretch reads KPEKGAVPKKKDP. Residues 253–291 show a composition bias toward polar residues; the sequence is PNCTSVPTSARQAGAHTPSNRGATGKNNTRTNKPATPTT. Residue 366–373 participates in ATP binding; the sequence is GPPGNGKT.

It belongs to the AAA ATPase family. Spastin subfamily. Homohexamer. The homohexamer is stabilized by ATP-binding. The homohexamer may adopt a ring conformation through which microtubules pass prior to being severed. Interacts with microtubules.

It is found in the membrane. It localises to the cytoplasm. The protein localises to the cytoskeleton. The protein resides in the microtubule organizing center. Its subcellular location is the centrosome. It is found in the perinuclear region. It localises to the nucleus. The enzyme catalyses n ATP + n H2O + a microtubule = n ADP + n phosphate + (n+1) alpha/beta tubulin heterodimers.. Functionally, ATP-dependent microtubule severing protein that specifically recognizes and cuts microtubules that are polyglutamylated. Preferentially recognizes and acts on microtubules decorated with short polyglutamate tails: severing activity increases as the number of glutamates per tubulin rises from one to eight, but decreases beyond this glutamylation threshold. Microtubule severing promotes reorganization of cellular microtubule arrays and the release of microtubules from the centrosome following nucleation. Required for membrane traffic from the endoplasmic reticulum (ER) to the Golgi and for completion of the abscission stage of cytokinesis. Also plays a role in axon growth and the formation of axonal branches. This Xenopus laevis (African clawed frog) protein is Spastin.